Here is a 689-residue protein sequence, read N- to C-terminus: Homoaconitase, mitochondrial (689 aa).

A mitochondrion-targeting transit peptide spans 1–17; sequence MVVLRRSFHVYTRLQRG. [4Fe-4S] cluster is bound by residues Cys336, Cys403, and Cys406.

This sequence belongs to the aconitase/IPM isomerase family. Requires [4Fe-4S] cluster as cofactor.

Its subcellular location is the mitochondrion. It carries out the reaction (2R,3S)-homoisocitrate = cis-homoaconitate + H2O. It functions in the pathway amino-acid biosynthesis; L-lysine biosynthesis via AAA pathway; L-alpha-aminoadipate from 2-oxoglutarate: step 3/5. Its function is as follows. Catalyzes the reversible hydration of cis-homoaconitate to (2R,3S)-homoisocitrate, a step in the alpha-aminoadipate pathway for lysine biosynthesis. This Candida glabrata (strain ATCC 2001 / BCRC 20586 / JCM 3761 / NBRC 0622 / NRRL Y-65 / CBS 138) (Yeast) protein is Homoaconitase, mitochondrial (LYS4).